The chain runs to 209 residues: Probable GTP-binding protein EngB (209 aa).

The EngB-type G domain occupies 22–198 (TPLEIAFVGR…NRTVGSWLDA (177 aa)). Positions 37 and 59 each coordinate Mg(2+).

This sequence belongs to the TRAFAC class TrmE-Era-EngA-EngB-Septin-like GTPase superfamily. EngB GTPase family. Requires Mg(2+) as cofactor.

Its function is as follows. Necessary for normal cell division and for the maintenance of normal septation. The polypeptide is Probable GTP-binding protein EngB (Neisseria meningitidis serogroup B (strain ATCC BAA-335 / MC58)).